We begin with the raw amino-acid sequence, 546 residues long: Glutamate--tRNA ligase (546 aa).

The 'HIGH' region motif lies at 41–51 (PSPTGFQHIGG). A 'KMSKS' region motif is present at residues 293 to 297 (KLSKR). Residue Lys296 coordinates ATP.

It belongs to the class-I aminoacyl-tRNA synthetase family. Glutamate--tRNA ligase type 1 subfamily. In terms of assembly, monomer.

It localises to the cytoplasm. The enzyme catalyses tRNA(Glu) + L-glutamate + ATP = L-glutamyl-tRNA(Glu) + AMP + diphosphate. Functionally, catalyzes the attachment of glutamate to tRNA(Glu) in a two-step reaction: glutamate is first activated by ATP to form Glu-AMP and then transferred to the acceptor end of tRNA(Glu). The chain is Glutamate--tRNA ligase from Clostridium perfringens (strain 13 / Type A).